A 398-amino-acid polypeptide reads, in one-letter code: Succinate--CoA ligase [ADP-forming] subunit beta (398 aa).

One can recognise an ATP-grasp domain in the interval 9 to 253; sequence KEILASYGVR…IREENPIEVE (245 aa). ATP contacts are provided by residues Lys-50, 57 to 59, Val-106, and Glu-116; that span reads GRG. Mg(2+) is bound by residues Asn-208 and Asp-222. Residues Asn-273 and 330-332 contribute to the substrate site; that span reads GIV.

Belongs to the succinate/malate CoA ligase beta subunit family. Heterotetramer of two alpha and two beta subunits. It depends on Mg(2+) as a cofactor.

It carries out the reaction succinate + ATP + CoA = succinyl-CoA + ADP + phosphate. The enzyme catalyses GTP + succinate + CoA = succinyl-CoA + GDP + phosphate. Its pathway is carbohydrate metabolism; tricarboxylic acid cycle; succinate from succinyl-CoA (ligase route): step 1/1. Its function is as follows. Succinyl-CoA synthetase functions in the citric acid cycle (TCA), coupling the hydrolysis of succinyl-CoA to the synthesis of either ATP or GTP and thus represents the only step of substrate-level phosphorylation in the TCA. The beta subunit provides nucleotide specificity of the enzyme and binds the substrate succinate, while the binding sites for coenzyme A and phosphate are found in the alpha subunit. This is Succinate--CoA ligase [ADP-forming] subunit beta from Flavobacterium psychrophilum (strain ATCC 49511 / DSM 21280 / CIP 103535 / JIP02/86).